The chain runs to 126 residues: Probable cystatin-16 (126 aa).

The signal sequence occupies residues M1–A20. C84 and C94 form a disulfide bridge. Residue N106 is glycosylated (N-linked (GlcNAc...) asparagine).

Belongs to the cystatin family.

It is found in the secreted. In Bos taurus (Bovine), this protein is Probable cystatin-16.